Here is a 560-residue protein sequence, read N- to C-terminus: Ribonuclease J 1 (560 aa).

Residues H76, H78, D80, H81, H144, and D166 each coordinate Zn(2+). H366–H370 contacts substrate. H392 serves as a coordination point for Zn(2+).

It belongs to the metallo-beta-lactamase superfamily. RNA-metabolizing metallo-beta-lactamase-like family. Bacterial RNase J subfamily. As to quaternary structure, homodimer, may be a subunit of the RNA degradosome. The cofactor is Zn(2+).

The protein resides in the cytoplasm. Its function is as follows. An RNase that has 5'-3' exonuclease and possibly endonuclease activity. Involved in maturation of rRNA and in some organisms also mRNA maturation and/or decay. Has an overlapping but not completely redundant role with RNase J2 in the decay of mRNA. This is Ribonuclease J 1 from Streptococcus pyogenes serotype M3 (strain ATCC BAA-595 / MGAS315).